We begin with the raw amino-acid sequence, 402 residues long: Deacetylase Oant_2987 (402 aa).

Residues histidine 70, histidine 72, lysine 168, histidine 201, histidine 224, and aspartate 284 each coordinate Zn(2+). Lysine 168 carries the post-translational modification N6-carboxylysine.

This sequence belongs to the metallo-dependent hydrolases superfamily. Atu3266/EF_0837 deacetylase family. Zn(2+) serves as cofactor.

Functionally, esterase that catalyzes the deacetylation of acetyl-(R)-mandelate (in vitro). Can also hydrolyze acetyl glycolate, but with lower efficiency. Has very low N-acetyl-D-amino acid deacetylase activity with N-acetyl-D-serine and N-acetyl-D-threonine (in vitro). Theoretical substrate docking studies suggest that other N-acetylated amino acids may optimally occupy the active site and may in fact be the physiological substrates. This chain is Deacetylase Oant_2987, found in Brucella anthropi (strain ATCC 49188 / DSM 6882 / CCUG 24695 / JCM 21032 / LMG 3331 / NBRC 15819 / NCTC 12168 / Alc 37) (Ochrobactrum anthropi).